Here is a 353-residue protein sequence, read N- to C-terminus: Stomatin-like protein 2, mitochondrial (353 aa).

The N-terminal 28 residues, 1–28, are a transit peptide targeting the mitochondrion; sequence MLARAARGTGALLLRGSVQASGRIPRRA. S17 bears the Phosphoserine; by PKC/PRKCZ mark. At Y124 the chain carries Phosphotyrosine. N6-acetyllysine; alternate is present on K145. At K145 the chain carries N6-succinyllysine; alternate. A coiled-coil region spans residues 215–252; the sequence is INVAEGKKQAQILASEAEKAEQINQAAGEASAVLAKAK. An N6-acetyllysine modification is found at K233. Residues 324–353 form a disordered region; it reads VPGAQNSSEARRDVQTTDTSIEELGRVKLS. Position 330 is a phosphoserine (S330).

Belongs to the band 7/mec-2 family. As to quaternary structure, forms homooligomers. Interacts with MFN2; may form heterooligomers. Interacts with PHB1 and PHB2; recruits them to cardiolipin-enriched mitochondrial membranes and stabilizes them. Interacts with CACNA2D2.

Its subcellular location is the cell membrane. The protein localises to the mitochondrion. It is found in the mitochondrion inner membrane. It localises to the mitochondrion intermembrane space. The protein resides in the membrane raft. Its subcellular location is the cytoplasm. The protein localises to the cytoskeleton. Its function is as follows. Mitochondrial protein that probably regulates the biogenesis and the activity of mitochondria. Stimulates cardiolipin biosynthesis, binds cardiolipin-enriched membranes where it recruits and stabilizes some proteins including prohibitin and may therefore act in the organization of functional microdomains in mitochondrial membranes. Through regulation of the mitochondrial function may play a role into several biological processes including cell migration, cell proliferation, T-cell activation, calcium homeostasis and cellular response to stress. May play a role in calcium homeostasis through negative regulation of calcium efflux from mitochondria. Required for mitochondrial hyperfusion a pro-survival cellular response to stress which results in increased ATP production by mitochondria. May also regulate the organization of functional domains at the plasma membrane and play a role in T-cell activation through association with the T-cell receptor signaling complex and its regulation. This Rattus norvegicus (Rat) protein is Stomatin-like protein 2, mitochondrial (Stoml2).